The chain runs to 696 residues: Serotransferrin (696 aa).

Transferrin-like domains follow at residues 6–332 and 346–672; these read VRWC…NLRE and VRWC…NLRK. Cystine bridges form between C9–C47 and C19–C38. Dimethylated arginine is present on R23. N25 carries an N-linked (GlcNAc...) asparagine glycan. Residues D62 and Y94 each coordinate Fe(3+). Cystine bridges form between C117/C198, C157/C173, C160/C181, C170/C183, and C231/C245. Hydrogencarbonate-binding residues include T119, R123, A125, and G126. Fe(3+) is bound at residue Y192. H253 contacts Fe(3+). Disulfide bonds link C343–C605, C349–C381, C359–C372, C406–C682, C423–C646, C456–C532, C480–C673, C490–C504, C501–C515, C572–C586, and C624–C629. S374 bears the Phosphoserine mark. Fe(3+) contacts are provided by D396 and Y431. Hydrogencarbonate is bound by residues T458, R462, A464, and G465. N-linked (GlcNAc...) asparagine glycosylation occurs at N497. Y526 contacts Fe(3+). H594 lines the Fe(3+) pocket. S674 carries the phosphoserine modification.

The protein belongs to the transferrin family. As to quaternary structure, monomer. Part of a complex composed of SLC40A1/ferroportin, TF/transferrin and HEPH/hephaestin that transfers iron from cells to transferrin. In terms of tissue distribution, expressed by the liver and secreted in plasma.

Its subcellular location is the secreted. Transferrins are iron binding transport proteins which can bind two Fe(3+) ions in association with the binding of an anion, usually bicarbonate. It is responsible for the transport of iron from sites of absorption and heme degradation to those of storage and utilization. Serum transferrin may also have a further role in stimulating cell proliferation. The chain is Serotransferrin (TF) from Sus scrofa (Pig).